We begin with the raw amino-acid sequence, 516 residues long: Apolipoprotein N-acyltransferase (516 aa).

The next 5 membrane-spanning stretches (helical) occupy residues 23–43, 68–88, 94–114, 135–155, and 178–198; these read ILIL…AFAP, AFWL…RWIY, VAGL…AYLA, WLLA…WVMT, and LGGI…LAML. In terms of domain architecture, CN hydrolase spans 241 to 481; sequence AQGNIAQELK…VLTGFAQSRQ (241 aa). The Proton acceptor role is filled by E279. K339 is an active-site residue. C391 functions as the Nucleophile in the catalytic mechanism. The helical transmembrane segment at 489-509 threads the bilayer; the sequence is FGNLPVVLGCGALLLLALLLG.

It belongs to the CN hydrolase family. Apolipoprotein N-acyltransferase subfamily.

It localises to the cell inner membrane. The enzyme catalyses N-terminal S-1,2-diacyl-sn-glyceryl-L-cysteinyl-[lipoprotein] + a glycerophospholipid = N-acyl-S-1,2-diacyl-sn-glyceryl-L-cysteinyl-[lipoprotein] + a 2-acyl-sn-glycero-3-phospholipid + H(+). The protein operates within protein modification; lipoprotein biosynthesis (N-acyl transfer). Catalyzes the phospholipid dependent N-acylation of the N-terminal cysteine of apolipoprotein, the last step in lipoprotein maturation. This chain is Apolipoprotein N-acyltransferase, found in Chromobacterium violaceum (strain ATCC 12472 / DSM 30191 / JCM 1249 / CCUG 213 / NBRC 12614 / NCIMB 9131 / NCTC 9757 / MK).